The primary structure comprises 288 residues: MKIAVMTDSTSYLSQDLIDKYNIQIAPLSVTFDDGKNFTESNEIAIEEFYNKMASSQTIPTTSQPAIGEWITKYEMLRDQGYTDIIVICLSSGISGSYQSSYQAGEMVEGVNVHAFDSKLAAMIEGCYVLRAIEMVEEGYEPQQIIDDLTNMREHTGAYLIVDDLKNLQKSGRITGAQAWVGTLLKMKPVLKFEDGKIIPEEKVRTKKRAIQTLEKKVLDIVKDFEEVTLFVINGDHFEDGQALYKKLQEDCPSGYQVAYSEFGPVVAAHLGSGGLGLGYVGRKIRLT.

The region spanning 3–282 (IAVMTDSTSY…SGGLGLGYVG (280 aa)) is the DegV domain. The hexadecanoate site is built by Thr-62 and Ser-95.

Functionally, may bind long-chain fatty acids, such as palmitate, and may play a role in lipid transport or fatty acid metabolism. The chain is DegV domain-containing protein from Staphylococcus aureus.